We begin with the raw amino-acid sequence, 422 residues long: MRIVVNLKPEEIPKHWYNVLADLPFKLDPPLDPETKQPISPEKLSVIFPMSLIEQEVSEERFIEIPEPVLKEYAVYRPTPLIRATFLEEYLQTPARIYYKYEGVSPTGSHKPNTAIAQAYYNKIEGVKRLVTETGAGQWGSALSYAGAKFGLEVKVFMVKVSYQQKPMRKYMMNLFGGKVTPSPSEETNFGRKILSEDPDNPGSLGIAISEALEVAVSDPNTKYSLGSVLNHVLLHQTVIGLEIKKQLELIGEKPDILLGCHGGGSNFGGTILPFVPDKLSGRDIRFVACEPAACPSLTKGNYDYDFGDTAGLTPLLKMYTLGKDFIPPKIHAGGLRYHGSAPIIARLVKEGLVEAQAFDQDETFEAAKIFAKLEGIIPAPESAHAIAGAIREAKKAKEEGKERVIVFTLSGHGLLDLTAYV.

Lys-111 is modified (N6-(pyridoxal phosphate)lysine).

It belongs to the TrpB family. Tetramer of two alpha and two beta chains. Pyridoxal 5'-phosphate serves as cofactor.

It carries out the reaction (1S,2R)-1-C-(indol-3-yl)glycerol 3-phosphate + L-serine = D-glyceraldehyde 3-phosphate + L-tryptophan + H2O. It participates in amino-acid biosynthesis; L-tryptophan biosynthesis; L-tryptophan from chorismate: step 5/5. The beta subunit is responsible for the synthesis of L-tryptophan from indole and L-serine. In Thermotoga maritima (strain ATCC 43589 / DSM 3109 / JCM 10099 / NBRC 100826 / MSB8), this protein is Tryptophan synthase beta chain 2 (trpB2).